The following is a 320-amino-acid chain: N-acetylneuraminate lyase (320 aa).

Aceneuramate is bound by residues Thr51 and Thr52. The Proton donor role is filled by Tyr143. The active-site Schiff-base intermediate with substrate is Lys173. Aceneuramate-binding residues include Ser175, Gly199, Asp201, Glu202, and Ser218.

The protein belongs to the DapA family. NanA subfamily. In terms of assembly, homotetramer. In terms of tissue distribution, isoform 2 is expressed in placenta, liver, kidney, pancreas, spleen, thymus, ovary, small intestine and peripheral blood leukocyte.

It is found in the cytoplasm. It catalyses the reaction aceneuramate = aldehydo-N-acetyl-D-mannosamine + pyruvate. It functions in the pathway amino-sugar metabolism; N-acetylneuraminate degradation. Catalyzes the cleavage of N-acetylneuraminic acid (sialic acid) to form pyruvate and N-acetylmannosamine via a Schiff base intermediate. It prevents sialic acids from being recycled and returning to the cell surface. Involved in the N-glycolylneuraminic acid (Neu5Gc) degradation pathway. Although human is not able to catalyze formation of Neu5Gc due to the inactive CMAHP enzyme, Neu5Gc is present in food and must be degraded. The polypeptide is N-acetylneuraminate lyase (Homo sapiens (Human)).